Here is a 253-residue protein sequence, read N- to C-terminus: RBPJ-interacting and tubulin-associated protein 1 (253 aa).

3 disordered regions span residues 30-89, 127-175, and 188-253; these read SPAR…KNKY, TPPA…LCVP, and HLTV…PPWK. Residues 71–81 are compositionally biased toward polar residues; sequence SPSSRGSTPNL. The short motif at 81–97 is the Nuclear localization signal element; the sequence is LTPRKKNKYRLIGHAPS. Residues 112–140 form an interaction with RBPJ/RBPSUH region; that stretch reads RMAVGDAAKLRTLFWTPPATPRGSHTPCP. An interaction with tubulin region spans residues 140-253; that stretch reads PRETPLRAIH…CPPKPKPPWK (114 aa). Residues 188-228 are compositionally biased toward polar residues; the sequence is HLTVPSTGHPASSAPQTNGPWSPRPNTSGATVQSPLVTSKA.

This sequence belongs to the RITA family. As to quaternary structure, interacts with RBPJ/RBPSUH.

It is found in the cytoplasm. The protein resides in the nucleus. The protein localises to the cytoskeleton. Its subcellular location is the microtubule organizing center. It localises to the centrosome. In terms of biological role, tubulin-binding protein that acts as a negative regulator of Notch signaling pathway. Shuttles between the cytoplasm and the nucleus and mediates the nuclear export of RBPJ/RBPSUH, thereby preventing the interaction between RBPJ/RBPSUH and NICD product of Notch proteins (Notch intracellular domain), leading to down-regulate Notch-mediated transcription. May play a role in neurogenesis. The polypeptide is RBPJ-interacting and tubulin-associated protein 1 (Rita1) (Mus musculus (Mouse)).